The following is an 853-amino-acid chain: Trimethylguanosine synthase (853 aa).

The tract at residues 53–80 (NNSGDQATEEEEGGYSCGTAESHDSKGI) is disordered. Ser-55 carries the phosphoserine modification. The residue at position 60 (Thr-60) is a Phosphothreonine. Phosphoserine occurs at positions 85, 89, 96, and 141. Tyr-146 is subject to Phosphotyrosine. Residues 149–187 (DDILASDDPSSIEQYENTRTYELQSKKDTETENPPVENT) are disordered. At Ser-154 the chain carries Phosphoserine. Positions 156–171 (DPSSIEQYENTRTYEL) are enriched in polar residues. The residue at position 189 (Ser-189) is a Phosphoserine. Disordered stretches follow at residues 334–461 (SQLD…GGIP) and 527–632 (DEEA…KKVN). The segment covering 367-382 (NGGTNEESNSSGNTNT) has biased composition (low complexity). Ser-412, Ser-438, and Ser-578 each carry phosphoserine. Residues 431–442 (DIDENPASDFDD) are compositionally biased toward acidic residues. The span at 564–578 (ETNNPEPEKCQSVSS) shows a compositional bias: polar residues. The span at 608-619 (PDSRQAETEAEV) shows a compositional bias: basic and acidic residues. A compositionally biased stretch (basic residues) spans 620-630 (KKKKNKKKNKK). Residues 631–846 (VNGLPPEIAA…TITAYFGDLI (216 aa)) are sufficient for catalytic activity. Asp-719 provides a ligand contact to S-adenosyl-L-methionine. Trp-766 serves as a coordination point for N(7)-methylguanosine.

It belongs to the methyltransferase superfamily. Trimethylguanosine synthase family. As to quaternary structure, may form homooligomers. Interacts with CREBBP/CBP, EED/WAIT1, EP300/P300, NCOA6/PRIP, PPARBP/PBP and SMN. Ubiquitously expressed. High expression in heart, skeletal muscle, kidney, liver and placenta.

The protein localises to the cytoplasm. It localises to the nucleus. Its subcellular location is the cajal body. It is found in the nucleolus. It carries out the reaction a 5'-end (N(7)-methyl 5'-triphosphoguanosine)-ribonucleoside in snRNA + S-adenosyl-L-methionine = a 5'-end (N(2),N(7)-dimethyl 5'-triphosphoguanosine)-ribonucleoside in snRNA + S-adenosyl-L-homocysteine + H(+). The enzyme catalyses a 5'-end (N(7)-methyl 5'-triphosphoguanosine)-ribonucleoside in snoRNA + S-adenosyl-L-methionine = a 5'-end (N(2),N(7)-dimethyl 5'-triphosphoguanosine)-ribonucleoside in snoRNA + S-adenosyl-L-homocysteine + H(+). It catalyses the reaction a 5'-end (N(2),N(7)-dimethyl 5'-triphosphoguanosine)-ribonucleoside in snRNA + S-adenosyl-L-methionine = a 5'-end (N(2),N(2),N(7)-trimethyl 5'-triphosphoguanosine)-ribonucleoside in snRNA + S-adenosyl-L-homocysteine + H(+). The catalysed reaction is a 5'-end (N(2),N(7)-dimethyl 5'-triphosphoguanosine)-ribonucleoside in snoRNA + S-adenosyl-L-methionine = a 5'-end (N(2),N(2),N(7)-trimethyl 5'-triphosphoguanosine)-ribonucleoside in snoRNA + S-adenosyl-L-homocysteine + H(+). Catalyzes the 2 serial methylation steps for the conversion of the 7-monomethylguanosine (m(7)G) caps of snRNAs and snoRNAs to a 2,2,7-trimethylguanosine (m(2,2,7)G) cap structure. The enzyme is specific for guanine, and N7 methylation must precede N2 methylation. Hypermethylation of the m7G cap of U snRNAs leads to their concentration in nuclear foci, their colocalization with coilin and the formation of canonical Cajal bodies (CBs). Plays a role in transcriptional regulation. The polypeptide is Trimethylguanosine synthase (TGS1) (Homo sapiens (Human)).